Here is a 317-residue protein sequence, read N- to C-terminus: Periplasmic [NiFe] hydrogenase small subunit 1 (317 aa).

A signal peptide (tat-type signal) is located at residues 1–49 (MRFSVGLGKEGAEERLARRGVSRRDFLKFCTAIAVTMGMGPAFAPEVAR). 8 residues coordinate [4Fe-4S] cluster: Cys-67, Cys-70, Cys-164, Cys-200, His-238, Cys-241, Cys-266, and Cys-272. 3 residues coordinate [3Fe-4S] cluster: Cys-281, Cys-299, and Cys-302.

Belongs to the [NiFe]/[NiFeSe] hydrogenase small subunit family. As to quaternary structure, heterodimer of a large and a small subunit. [3Fe-4S] cluster serves as cofactor. Requires [4Fe-4S] cluster as cofactor. Predicted to be exported by the Tat system. The position of the signal peptide cleavage has not been experimentally proven.

It localises to the periplasm. It catalyses the reaction 2 Fe(III)-[cytochrome c3] + H2 = 2 Fe(II)-[cytochrome c3] + 2 H(+). The sequence is that of Periplasmic [NiFe] hydrogenase small subunit 1 (hynB1) from Nitratidesulfovibrio vulgaris (strain ATCC 29579 / DSM 644 / CCUG 34227 / NCIMB 8303 / VKM B-1760 / Hildenborough) (Desulfovibrio vulgaris).